Reading from the N-terminus, the 81-residue chain is Omega-conotoxin-like Vc6.4 (81 aa).

An N-terminal signal peptide occupies residues 1-22 (MKLTCVMIVAVLFLTANTFVTA). The propeptide occupies 23 to 51 (VPHSSNVLENLYLKARHEMENPEASKLNT). 3 disulfide bridges follow: cysteine 55–cysteine 72, cysteine 62–cysteine 76, and cysteine 71–cysteine 80.

The protein belongs to the conotoxin O1 superfamily. Expressed by the venom duct.

Its subcellular location is the secreted. Its function is as follows. Omega-conotoxins act at presynaptic membranes, they bind and block voltage-gated calcium channels. Act on high voltage-activated (HVA) calcium currents in molluscan neurons. This Conus victoriae (Queen Victoria cone) protein is Omega-conotoxin-like Vc6.4.